Reading from the N-terminus, the 37-residue chain is Esculentin-2Ra (37 aa).

The cysteines at positions 31 and 37 are disulfide-linked.

In terms of tissue distribution, expressed by the skin glands.

The protein localises to the secreted. Antimicrobial peptide. The protein is Esculentin-2Ra of Pelophylax ridibundus (Marsh frog).